The sequence spans 148 residues: MSSDFPHYNFRMPNIGFQNLPLNIYIVVFGTAIFVFILSLLFCCYLIRLRHQAHKEFYAYKQVILKEKVKELNLHELCAVCLEDFKPRDELGICPCKHAFHRKCLIKWLEVRKVCPLCNMPVLQLAQLHSKQDRGPPQGPLPGAENIV.

A helical transmembrane segment spans residues 24–44; it reads IYIVVFGTAIFVFILSLLFCC. Residues 78 to 119 form an RING-type zinc finger; the sequence is CAVCLEDFKPRDELGICPCKHAFHRKCLIKWLEVRKVCPLCN.

Interacts with TRPC1, TRPC3, TRPC4, TRPC5, TRPC6 and TRPC7.

It is found in the golgi apparatus membrane. Functionally, may play a role in TRPCs intracellular trafficking. The polypeptide is RING finger protein 24 (RNF24) (Homo sapiens (Human)).